The following is a 794-amino-acid chain: Lon protease (794 aa).

The 194-residue stretch at 29–222 (VPLLPLRGVL…TLISIIQDEQ (194 aa)) folds into the Lon N-terminal domain. Residue 374 to 381 (GPPGVGKT) coordinates ATP. Positions 610-791 (TDQVGMATGL…DEVLEHALVG (182 aa)) constitute a Lon proteolytic domain. Active-site residues include S697 and K740.

This sequence belongs to the peptidase S16 family. As to quaternary structure, homohexamer. Organized in a ring with a central cavity.

It is found in the cytoplasm. The catalysed reaction is Hydrolysis of proteins in presence of ATP.. Its function is as follows. ATP-dependent serine protease that mediates the selective degradation of mutant and abnormal proteins as well as certain short-lived regulatory proteins. Required for cellular homeostasis and for survival from DNA damage and developmental changes induced by stress. Degrades polypeptides processively to yield small peptide fragments that are 5 to 10 amino acids long. Binds to DNA in a double-stranded, site-specific manner. In Bacillus thuringiensis (strain Al Hakam), this protein is Lon protease.